Reading from the N-terminus, the 620-residue chain is 1-deoxy-D-xylulose-5-phosphate synthase (620 aa).

Thiamine diphosphate contacts are provided by residues His-80 and 121–123; that span reads GHS. Residue Asp-152 participates in Mg(2+) binding. Residues 153–154, Asn-181, Tyr-288, and Glu-370 contribute to the thiamine diphosphate site; that span reads GA. Residue Asn-181 coordinates Mg(2+).

This sequence belongs to the transketolase family. DXPS subfamily. In terms of assembly, homodimer. Mg(2+) is required as a cofactor. Thiamine diphosphate serves as cofactor.

It catalyses the reaction D-glyceraldehyde 3-phosphate + pyruvate + H(+) = 1-deoxy-D-xylulose 5-phosphate + CO2. It participates in metabolic intermediate biosynthesis; 1-deoxy-D-xylulose 5-phosphate biosynthesis; 1-deoxy-D-xylulose 5-phosphate from D-glyceraldehyde 3-phosphate and pyruvate: step 1/1. Its function is as follows. Catalyzes the acyloin condensation reaction between C atoms 2 and 3 of pyruvate and glyceraldehyde 3-phosphate to yield 1-deoxy-D-xylulose-5-phosphate (DXP). The sequence is that of 1-deoxy-D-xylulose-5-phosphate synthase from Klebsiella pneumoniae (strain 342).